The chain runs to 512 residues: Monocarboxylate transporter 10 (512 aa).

The tract at residues M1–E44 is disordered. Over M1–E63 the chain is Cytoplasmic. Residues G64 to I84 traverse the membrane as a helical segment. Topologically, residues Q85 to T111 are extracellular. Residues A112–F132 form a helical membrane-spanning segment. At T133–T141 the chain is on the cytoplasmic side. A helical membrane pass occupies residues A142–I162. At E163–T168 the chain is on the extracellular side. Residues Y169–G189 form a helical membrane-spanning segment. At H190–G201 the chain is on the cytoplasmic side. Residues I202–I222 traverse the membrane as a helical segment. At S223 to R232 the chain is on the extracellular side. The chain crosses the membrane as a helical span at residues I233–P253. Residues S254–A291 are Cytoplasmic-facing. The residue at position 260 (S260) is a Phosphoserine. Residues V292 to M312 form a helical membrane-spanning segment. Residues N313–E326 lie on the Extracellular side of the membrane. The chain crosses the membrane as a helical span at residues V327–A347. Over D348–S362 the chain is Cytoplasmic. Residues F363 to I383 form a helical membrane-spanning segment. A384 is a topological domain (extracellular). The chain crosses the membrane as a helical span at residues V385 to F405. Topologically, residues E406–A416 are cytoplasmic. A helical transmembrane segment spans residues I417–L437. Over L438–A448 the chain is Extracellular. The helical transmembrane segment at F449–I469 threads the bilayer. Topologically, residues H470–I512 are cytoplasmic. A phosphoserine mark is found at S495, S498, S500, and S501.

The protein belongs to the major facilitator superfamily. Monocarboxylate porter (TC 2.A.1.13) family. In terms of processing, not N-glycosylated. Highly expressed in small intestine, particularly in jejunum and ileum, scarcely in colon and substantially in kidney, liver and skeletal muscle. In the brain expression is low and appears to be restricted to a subset of neurons, microglia cells, and oligodendrocytes.

Its subcellular location is the cell membrane. The protein resides in the basolateral cell membrane. It carries out the reaction L-tryptophan(in) = L-tryptophan(out). It catalyses the reaction L-tyrosine(in) = L-tyrosine(out). The catalysed reaction is L-phenylalanine(in) = L-phenylalanine(out). The enzyme catalyses 3,3',5-triiodo-L-thyronine(out) = 3,3',5-triiodo-L-thyronine(in). It carries out the reaction L-thyroxine(out) = L-thyroxine(in). In terms of biological role, sodium- and proton-independent thyroid hormones and aromatic acids transporter. Mediates both uptake and efflux of 3,5,3'-triiodothyronine (T3) and 3,5,3',5'-tetraiodothyronine (T4) with high affinity, suggesting a role in the homeostasis of thyroid hormone levels. Responsible for low affinity bidirectional transport of the aromatic amino acids, such as phenylalanine, tyrosine, tryptophan and L-3,4-dihydroxyphenylalanine (L-dopa). Plays an important role in homeostasis of aromatic amino acids. The protein is Monocarboxylate transporter 10 (Slc16a10) of Mus musculus (Mouse).